The chain runs to 247 residues: UPF0612 protein P20C8.01c (247 aa).

Coiled-coil stretches lie at residues 27–63 and 138–225; these read IKRY…MKYE and DTVQ…DARS.

This sequence belongs to the UPF0612 family.

It is found in the cytoplasm. The protein is UPF0612 protein P20C8.01c of Schizosaccharomyces pombe (strain 972 / ATCC 24843) (Fission yeast).